The chain runs to 528 residues: Carboxysome shell carbonic anhydrase (528 aa).

A disordered region spans residues 17–47; sequence PIAPNPRWQKENPTAHGSTDTGGFGYNGGNE. A Zn(2+)-binding site is contributed by Cys184. Asp186 acts as the Proton acceptor in catalysis. His252 and Cys263 together coordinate Zn(2+).

This sequence belongs to the beta-class carbonic anhydrase family. CsoSCA subfamily. In terms of assembly, homodimer. The cofactor is Zn(2+).

It localises to the carboxysome. It catalyses the reaction hydrogencarbonate + H(+) = CO2 + H2O. Its activity is regulated as follows. Inhibited by ethoxyzolamide and dithiothreitol (in crude extracts upon expression in E.coli). In terms of biological role, reversible hydration of carbon dioxide. This bacteria encodes at least 3 CA enzymes. Essential for chemolithotrophic carbon dioxide fixation, supplies CO(2) to RuBisCO (ribulose bisphosphate carboxylase, cbbL-cbbS) in the carboxysome. The sequence is that of Carboxysome shell carbonic anhydrase from Hydrogenovibrio crunogenus (strain DSM 25203 / XCL-2) (Thiomicrospira crunogena).